The sequence spans 323 residues: MKPKFETVELLSPTGEVVELKVVKRGLAQARPEPVDRNKPAWIKAPLPTGPRYQALKAMVRELRLHTVCQEALCPNIGECWTHGTLTVMILGDICTRACKFCAVHTGNPKGLVDPEEPRRVAEAIARMGVRYVVLTSVDRDDLPDGGASHFAATIRAIKERAPGVLVEALTPDFQGDLKAVETVLAANPEVYAQNLETVRRLTPKVRDPRAGYEQTLKVLAHAKKVRPDILTKSSLMLGLGETEEEILEAMRDLRAAGVDILTLGQYLRPTPAHLPVARYVPPEDFKRYEAWGYELGFREVFAGPLVRSSYRADRVFLEATQR.

The [4Fe-4S] cluster site is built by Cys69, Cys74, Cys80, Cys95, Cys99, Cys102, and Ser310. The region spanning 81 to 299 (WTHGTLTVMI…EAWGYELGFR (219 aa)) is the Radical SAM core domain.

The protein belongs to the radical SAM superfamily. Lipoyl synthase family. Requires [4Fe-4S] cluster as cofactor.

Its subcellular location is the cytoplasm. It carries out the reaction [[Fe-S] cluster scaffold protein carrying a second [4Fe-4S](2+) cluster] + N(6)-octanoyl-L-lysyl-[protein] + 2 oxidized [2Fe-2S]-[ferredoxin] + 2 S-adenosyl-L-methionine + 4 H(+) = [[Fe-S] cluster scaffold protein] + N(6)-[(R)-dihydrolipoyl]-L-lysyl-[protein] + 4 Fe(3+) + 2 hydrogen sulfide + 2 5'-deoxyadenosine + 2 L-methionine + 2 reduced [2Fe-2S]-[ferredoxin]. It participates in protein modification; protein lipoylation via endogenous pathway; protein N(6)-(lipoyl)lysine from octanoyl-[acyl-carrier-protein]: step 2/2. Catalyzes the radical-mediated insertion of two sulfur atoms into the C-6 and C-8 positions of the octanoyl moiety bound to the lipoyl domains of lipoate-dependent enzymes, thereby converting the octanoylated domains into lipoylated derivatives. In Thermus thermophilus (strain ATCC 27634 / DSM 579 / HB8), this protein is Lipoyl synthase.